The primary structure comprises 230 residues: Sodium channel modifier 1 (230 aa).

Residue S2 is modified to Phosphoserine. Residues K4 to R20 carry the Bipartite nuclear localization signal motif. A Matrin-type zinc finger spans residues F42 to L74. K67 is covalently cross-linked (Glycyl lysine isopeptide (Lys-Gly) (interchain with G-Cter in SUMO2)). Disordered regions lie at residues Y76–L106 and R129–D191. Residues P89 to T100 are compositionally biased toward basic and acidic residues. Residues S142–V151 are compositionally biased toward pro residues. A compositionally biased stretch (polar residues) spans G167–A180. A phosphoserine mark is found at S183 and S219. Positions R188–D230 are required for interaction with LUC7L2.

Component of the minor spliceosome. Within this complex, interacts with RNF113A, as well as with SF3B1/SF3b155, SF3B2/SF3b145, SF3B3/SF3b130 and CDC5L. May interact with LUC7L2 and SNRNP70.

It is found in the nucleus. It localises to the nucleoplasm. Its subcellular location is the nucleus speckle. As a component of the minor spliceosome, involved in the splicing of U12-type introns in pre-mRNAs. Plays a role in the regulation of primary cilia length and Hedgehog signaling. The sequence is that of Sodium channel modifier 1 (SCNM1) from Bos taurus (Bovine).